A 94-amino-acid polypeptide reads, in one-letter code: MTLFSSISSISNPMTNSKSRISSFGSGTSMGSNSIACGGGCGGGSGGILGLGLGLGLNLFGGSRGACGGNSGSSNPGNGPCSGGKCCGGSCCGI.

A disordered region spans residues Met-1–Gly-25.

The protein belongs to the hssA/B family.

The sequence is that of HssA/B-like protein 51 (hssl51) from Dictyostelium discoideum (Social amoeba).